Reading from the N-terminus, the 201-residue chain is Prostamide/prostaglandin F synthase (201 aa).

The protein belongs to the peroxiredoxin-like PRXL2 family. Prostamide/prostaglandin F synthase subfamily.

It is found in the cytoplasm. It localises to the cytosol. The enzyme catalyses prostaglandin H2 + [thioredoxin]-dithiol = prostaglandin F2alpha + [thioredoxin]-disulfide. It carries out the reaction prostamide F2alpha + [thioredoxin]-disulfide = prostamide H2 + [thioredoxin]-dithiol. Its function is as follows. Catalyzes the reduction of prostaglandin-ethanolamide H(2) (prostamide H(2)) to prostamide F(2alpha) with NADPH as proton donor. Also able to reduce prostaglandin H(2) to prostaglandin F(2alpha). This is Prostamide/prostaglandin F synthase (prxl2b) from Xenopus laevis (African clawed frog).